A 1150-amino-acid chain; its full sequence is Protogenin (1150 aa).

The signal sequence occupies residues 1 to 35 (MAPPLRPLARLRPPGMLLRALLLLLLLSPLPGVWC). 4 Ig-like domains span residues 36 to 130 (FSEL…AHLA), 135 to 222 (SAFE…ASLT), 235 to 322 (PTII…ATLT), and 327 to 411 (PSFV…ARLT). Residues 36 to 949 (FSELSFVKEP…YYHLDQKSMT (914 aa)) are Extracellular-facing. Disulfide bonds link Cys60–Cys113, Cys156–Cys205, Cys256–Cys304, and Cys348–Cys395. N-linked (GlcNAc...) asparagine glycosylation is present at Asn90. 5 Fibronectin type-III domains span residues 421–515 (APYN…TLED), 517–613 (PLRP…TPKA), 618–717 (APKS…VRDR), 724–817 (PPHH…TLPE), and 822–917 (PPVG…VLPK). N-linked (GlcNAc...) asparagine glycosylation occurs at Asn488. Asn630 is a glycosylation site (N-linked (GlcNAc...) asparagine). Residues 950–970 (GIAVGVGIALTCILICVLILI) traverse the membrane as a helical segment. Residues 971–1150 (YRSKARKSSA…SVISTTPPNL (180 aa)) lie on the Cytoplasmic side of the membrane. Disordered regions lie at residues 981–1002 (SKTA…ASGN) and 1086–1150 (ISDE…PPNL). Polar residues-rich tracts occupy residues 983-1000 (TAQN…SLAS) and 1092-1102 (PSSPGQTTSFS). The segment covering 1110 to 1138 (DTEHSANSEGSHETGDSGRFSHESNDEIH) has biased composition (basic and acidic residues). Residues 1141-1150 (SVISTTPPNL) are compositionally biased toward polar residues.

This sequence belongs to the immunoglobulin superfamily. DCC family.

It localises to the membrane. In terms of biological role, may play a role in anteroposterior axis elongation. The protein is Protogenin of Homo sapiens (Human).